The chain runs to 100 residues: Small ribosomal subunit protein uS14c (100 aa).

The protein belongs to the universal ribosomal protein uS14 family. As to quaternary structure, part of the 30S ribosomal subunit.

The protein localises to the plastid. It localises to the chloroplast. In terms of biological role, binds 16S rRNA, required for the assembly of 30S particles. The sequence is that of Small ribosomal subunit protein uS14c from Lepidium virginicum (Virginia pepperweed).